The sequence spans 103 residues: Large ribosomal subunit protein uL24 (103 aa).

The protein belongs to the universal ribosomal protein uL24 family. In terms of assembly, part of the 50S ribosomal subunit.

Its function is as follows. One of two assembly initiator proteins, it binds directly to the 5'-end of the 23S rRNA, where it nucleates assembly of the 50S subunit. In terms of biological role, one of the proteins that surrounds the polypeptide exit tunnel on the outside of the subunit. The sequence is that of Large ribosomal subunit protein uL24 from Haemophilus influenzae (strain ATCC 51907 / DSM 11121 / KW20 / Rd).